The sequence spans 336 residues: Apyrase (336 aa).

The signal sequence occupies residues 1–21; the sequence is MFLKFCVVAFAICLSINLSEG. N-linked (GlcNAc...) asparagine glycosylation occurs at N209.

Belongs to the apyrase family. Ca(2+) is required as a cofactor. Salivary gland (at protein level).

The protein resides in the secreted. The catalysed reaction is a ribonucleoside 5'-triphosphate + 2 H2O = a ribonucleoside 5'-phosphate + 2 phosphate + 2 H(+). Its function is as follows. Facilitates hematophagy by inhibiting ADP- and collagen-dependent platelet aggregation in the host. Cleaves adenosine triphosphate (ATP) and adenosine diphosphate (ADP) to adenosine monophosphate (AMP) and inorganic phosphate in calcium-dependent manner. The sequence is that of Apyrase from Phlebotomus duboscqi (Sandfly).